We begin with the raw amino-acid sequence, 75 residues long: RNA-binding protein Hfq (75 aa).

One can recognise a Sm domain in the interval 9–69 (DQFLNQLRKE…ISTFAPERNI (61 aa)).

The protein belongs to the Hfq family. Homohexamer.

Its function is as follows. RNA chaperone that binds small regulatory RNA (sRNAs) and mRNAs to facilitate mRNA translational regulation in response to envelope stress, environmental stress and changes in metabolite concentrations. Also binds with high specificity to tRNAs. The chain is RNA-binding protein Hfq from Geobacillus kaustophilus (strain HTA426).